The primary structure comprises 32 residues: MTPTLTPPPETVAPPAADERCDRCNAAGKLRI.

The polypeptide is Calichemicin antitumor antibiotic biosynthesis protein (Micromonospora echinospora (Micromonospora purpurea)).